The primary structure comprises 433 residues: Serine/threonine-protein phosphatase 2A activator 2 (433 aa).

The span at 1–10 (MTSQAPPQPA) shows a compositional bias: pro residues. Disordered regions lie at residues 1-67 (MTSQ…NWTF) and 367-400 (SMSE…GTGW). Over residues 11–23 (SSPGVAAPAAASS) the composition is skewed to low complexity. The span at 45 to 59 (NPTPIPETPALPTPP) shows a compositional bias: pro residues. Residues 367 to 382 (SMSEDTGAGDEADVED) show a composition bias toward acidic residues. Over residues 383–396 (DPHAGHDHTGKAHD) the composition is skewed to basic and acidic residues.

The protein belongs to the PTPA-type PPIase family.

The protein resides in the cytoplasm. The catalysed reaction is [protein]-peptidylproline (omega=180) = [protein]-peptidylproline (omega=0). PPIases accelerate the folding of proteins. It catalyzes the cis-trans isomerization of proline imidic peptide bonds in oligopeptides. Acts as a regulatory subunit for PP2A-like phosphatases modulating their activity or substrate specificity, probably by inducing a conformational change in the catalytic subunit, a direct target of the PPIase. Can reactivate inactive phosphatase PP2A-phosphatase methylesterase complexes (PP2Ai) in presence of ATP and Mg(2+) by dissociating the inactive form from the complex. The protein is Serine/threonine-protein phosphatase 2A activator 2 (RRD2) of Gibberella zeae (strain ATCC MYA-4620 / CBS 123657 / FGSC 9075 / NRRL 31084 / PH-1) (Wheat head blight fungus).